The chain runs to 141 residues: Protein wingless (141 aa).

Residue S3 is the site of O-palmitoleoyl serine; by PORCN attachment. Residues 40–49 (TDLEAPTQRN) are compositionally biased toward polar residues. The segment at 40–61 (TDLEAPTQRNDAAPHRAPRRER) is disordered. C107 and C122 are disulfide-bonded. 2 N-linked (GlcNAc...) asparagine glycosylation sites follow: N108 and N138.

The protein belongs to the Wnt family. Palmitoleoylated by porcupine. The lipid group functions as a sorting signal, targeting the ligand to polarized vesicles that transport wg to unique sites at the cell surface. Depalmitoleoylated by notum, leading to inhibit Wnt signaling pathway.

It localises to the secreted. It is found in the extracellular space. The protein localises to the extracellular matrix. Segment polarity protein. Binds to the frizzled seven-transmembrane receptors. This protein is probably a growth factor. The polypeptide is Protein wingless (WG) (Manduca sexta (Tobacco hawkmoth)).